The chain runs to 316 residues: Lipoyl synthase (316 aa).

Cys66, Cys71, Cys77, Cys92, Cys96, Cys99, and Ser306 together coordinate [4Fe-4S] cluster. The region spanning 78–295 (FNRGTATFMI…NLIAFDLGFK (218 aa)) is the Radical SAM core domain.

The protein belongs to the radical SAM superfamily. Lipoyl synthase family. [4Fe-4S] cluster is required as a cofactor.

It is found in the cytoplasm. The enzyme catalyses [[Fe-S] cluster scaffold protein carrying a second [4Fe-4S](2+) cluster] + N(6)-octanoyl-L-lysyl-[protein] + 2 oxidized [2Fe-2S]-[ferredoxin] + 2 S-adenosyl-L-methionine + 4 H(+) = [[Fe-S] cluster scaffold protein] + N(6)-[(R)-dihydrolipoyl]-L-lysyl-[protein] + 4 Fe(3+) + 2 hydrogen sulfide + 2 5'-deoxyadenosine + 2 L-methionine + 2 reduced [2Fe-2S]-[ferredoxin]. It participates in protein modification; protein lipoylation via endogenous pathway; protein N(6)-(lipoyl)lysine from octanoyl-[acyl-carrier-protein]: step 2/2. Catalyzes the radical-mediated insertion of two sulfur atoms into the C-6 and C-8 positions of the octanoyl moiety bound to the lipoyl domains of lipoate-dependent enzymes, thereby converting the octanoylated domains into lipoylated derivatives. The protein is Lipoyl synthase of Wigglesworthia glossinidia brevipalpis.